The following is a 205-amino-acid chain: MAASTASHRPIKGILKNKTSTTSSVVASAEQPRRTVEEELSKKSQKWDEMNILATYHPADKDYGLMKIDEPDTPYHNMIGDDEDVCSDSEGNEVMTPEILAKKLAAAEGSEPKFRTREQESSGEEDNDLSPEEREKKRQFEMKRKLHYNEGLNIKLARQLISKDLHDDDEDEEMSETADADSMNIEESNQGSTAGDHLQHKSQSS.

The disordered stretch occupies residues 1 to 44 (MAASTASHRPIKGILKNKTSTTSSVVASAEQPRRTVEEELSKKS). Ala-2 bears the N-acetylalanine mark. The interval 12–17 (KGILKN) is required for binding PPP1CC. Low complexity predominate over residues 19–29 (TSTTSSVVASA). A compositionally biased stretch (basic and acidic residues) spans 31-44 (QPRRTVEEELSKKS). A required for binding PPP1CC region spans residues 43–55 (KSQKWDEMNILAT). A Phosphoserine; by ATM modification is found at Ser-44. At Thr-73 the chain carries Phosphothreonine; by GSK3. Ser-87 and Ser-89 each carry phosphoserine. Residues Thr-96 and Thr-116 each carry the phosphothreonine modification. A disordered region spans residues 104 to 142 (LAAAEGSEPKFRTREQESSGEEDNDLSPEEREKKRQFEM). Over residues 110 to 120 (SEPKFRTREQE) the composition is skewed to basic and acidic residues. Phosphoserine occurs at positions 121, 122, and 130. Acidic residues predominate over residues 121-130 (SSGEEDNDLS). Basic and acidic residues predominate over residues 131–142 (PEEREKKRQFEM). Positions 147–150 (HYNE) are required for binding PPP1CC catalytic center, displacing metal ions and inhibition of PPP1CC catalytic activity. Positions 163 to 205 (KDLHDDDEDEEMSETADADSMNIEESNQGSTAGDHLQHKSQSS) are disordered. Residues 167–179 (DDDEDEEMSETAD) are compositionally biased toward acidic residues.

This sequence belongs to the protein phosphatase inhibitor 2 family. In terms of assembly, heterodimer with PP1. Phosphorylation on Ser-44 by ATM activates PP1 by dissociating the PP1-PPP1R2 complex. Phosphorylation on Thr-73 by GSK3 activates PP1 by dissociating the PP1-PPP1R2 complex. In terms of tissue distribution, central nervous system.

In terms of biological role, inhibitor of protein-phosphatase 1. The chain is Protein phosphatase inhibitor 2 (Ppp1r2) from Rattus norvegicus (Rat).